An 848-amino-acid chain; its full sequence is Probable disease resistance protein At5g43730 (848 aa).

Residues 25-62 (SNYIHLMESNLDALQKTMEELKNGRDDLLARVSIEEDK) adopt a coiled-coil conformation. In terms of domain architecture, NB-ARC spans 137-439 (VAQKIIPKAE…CEGYINPNRY (303 aa)). An ATP-binding site is contributed by 179–186 (GMGGIGKT). LRR repeat units follow at residues 534-555 (NLST…FFLF), 558-580 (KLVV…ISNL), 582-604 (SLQY…KKLR), 605-627 (KLIY…ATTL), and 629-649 (NLQV…IMEE).

The protein belongs to the disease resistance NB-LRR family.

Functionally, probable disease resistance protein. The sequence is that of Probable disease resistance protein At5g43730 from Arabidopsis thaliana (Mouse-ear cress).